Consider the following 278-residue polypeptide: Non-structural protein 2a (278 aa).

It belongs to the coronaviruses ns2a protein family.

The polypeptide is Non-structural protein 2a (Bovine coronavirus (strain LY-138) (BCoV)).